Consider the following 352-residue polypeptide: Phosphate acyltransferase (352 aa).

The protein belongs to the PlsX family. As to quaternary structure, homodimer. Probably interacts with PlsY.

It localises to the cytoplasm. It carries out the reaction a fatty acyl-[ACP] + phosphate = an acyl phosphate + holo-[ACP]. The protein operates within lipid metabolism; phospholipid metabolism. In terms of biological role, catalyzes the reversible formation of acyl-phosphate (acyl-PO(4)) from acyl-[acyl-carrier-protein] (acyl-ACP). This enzyme utilizes acyl-ACP as fatty acyl donor, but not acyl-CoA. The protein is Phosphate acyltransferase of Brucella anthropi (strain ATCC 49188 / DSM 6882 / CCUG 24695 / JCM 21032 / LMG 3331 / NBRC 15819 / NCTC 12168 / Alc 37) (Ochrobactrum anthropi).